We begin with the raw amino-acid sequence, 20 residues long: 39 kDa major outer membrane protein (20 aa).

It is found in the cell outer membrane. In Aggregatibacter actinomycetemcomitans (Actinobacillus actinomycetemcomitans), this protein is 39 kDa major outer membrane protein.